The sequence spans 393 residues: MIASVLPTYTRAPLAFVRGEGSWLWTADGSRYLDLGAGIAVNALGHAAPDLVATLTEQAGKLWHVSNLYRIPEQERLADMLVAKTFADTVFFTNSGTEACELAVKMVRKHFYDKGQPERTEILTFSGAFHGRSSAAIAAAGTEKMVKGFGPLLPGFVHLPWGDLDAVKAAVTETTAAILIEPIQGEGGIRPAPEGFLRALREICDETGTLLVFDEVQCGVARTGKLFAHEWAGVTPDVMMVAKGIGGGFPLGAVLATEDAASGMIAGTHGSTYGGNPLGCAIGAKMIEIVTAPGFLDEVSRKAGFLRQWLEGLVAAHPDIFEEVRGQGLMLGLRLKLPPGDVVKAAYAQNLLTVPAADNVLRLLPALTISEDDMAEAVRRLDAAAASLETQPA.

Pyridoxal 5'-phosphate-binding positions include 96 to 97 (GT) and Phe-129. Arg-132 provides a ligand contact to N(2)-acetyl-L-ornithine. 214 to 217 (DEVQ) contributes to the pyridoxal 5'-phosphate binding site. At Lys-243 the chain carries N6-(pyridoxal phosphate)lysine. Ser-271 provides a ligand contact to N(2)-acetyl-L-ornithine. Thr-272 contacts pyridoxal 5'-phosphate.

It belongs to the class-III pyridoxal-phosphate-dependent aminotransferase family. ArgD subfamily. In terms of assembly, homodimer. It depends on pyridoxal 5'-phosphate as a cofactor.

It is found in the cytoplasm. The catalysed reaction is N(2)-acetyl-L-ornithine + 2-oxoglutarate = N-acetyl-L-glutamate 5-semialdehyde + L-glutamate. Its pathway is amino-acid biosynthesis; L-arginine biosynthesis; N(2)-acetyl-L-ornithine from L-glutamate: step 4/4. In Rhodobacter capsulatus (strain ATCC BAA-309 / NBRC 16581 / SB1003), this protein is Acetylornithine aminotransferase.